The following is a 241-amino-acid chain: MDMKEWEIFYNKIMEDFGFDKDKDVESAVILNNILENANTIPVDKLKDIIEGREVFIFGAGPSIKKHINILKELREINYKNPIIVADGACKAFLEENIIPDIIVSDLDGDLEALFECNRKGSIIVVHAHGDNIEKIKKYVPKLKNVVGSCQIPNYKELNLRNVINFGGFTDGDRCCFLAYHFKAKKLILGGMDFGIYITKYSRPNIKEDIAIGDEIKIKKLEYAKTLINYLKDKIEIEFLK.

The protein belongs to the archaeal 6-HMPDK family. The cofactor is Mg(2+).

The enzyme catalyses 6-hydroxymethyl-7,8-dihydropterin + ATP = (7,8-dihydropterin-6-yl)methyl diphosphate + AMP + H(+). It participates in cofactor biosynthesis; 5,6,7,8-tetrahydromethanopterin biosynthesis. Catalyzes the transfer of diphosphate from ATP to 6-hydroxymethyl-7,8-dihydropterin (6-HMD), leading to 6-hydroxymethyl-7,8-dihydropterin diphosphate (6-HMDP). The sequence is that of 6-hydroxymethyl-7,8-dihydropterin pyrophosphokinase from Methanocaldococcus jannaschii (strain ATCC 43067 / DSM 2661 / JAL-1 / JCM 10045 / NBRC 100440) (Methanococcus jannaschii).